A 434-amino-acid polypeptide reads, in one-letter code: Methylenetetrahydrofolate--tRNA-(uracil-5-)-methyltransferase TrmFO (434 aa).

10 to 15 (GAGLAG) serves as a coordination point for FAD.

The protein belongs to the MnmG family. TrmFO subfamily. FAD is required as a cofactor.

The protein localises to the cytoplasm. The catalysed reaction is uridine(54) in tRNA + (6R)-5,10-methylene-5,6,7,8-tetrahydrofolate + NADH + H(+) = 5-methyluridine(54) in tRNA + (6S)-5,6,7,8-tetrahydrofolate + NAD(+). It catalyses the reaction uridine(54) in tRNA + (6R)-5,10-methylene-5,6,7,8-tetrahydrofolate + NADPH + H(+) = 5-methyluridine(54) in tRNA + (6S)-5,6,7,8-tetrahydrofolate + NADP(+). In terms of biological role, catalyzes the folate-dependent formation of 5-methyl-uridine at position 54 (M-5-U54) in all tRNAs. In Bacillus mycoides (strain KBAB4) (Bacillus weihenstephanensis), this protein is Methylenetetrahydrofolate--tRNA-(uracil-5-)-methyltransferase TrmFO.